Here is a 393-residue protein sequence, read N- to C-terminus: Prokineticin receptor 1 (393 aa).

Over 1–62 (METTMGFMDD…TNSRTFFAAK (62 aa)) the chain is Extracellular. 3 N-linked (GlcNAc...) asparagine glycosylation sites follow: asparagine 11, asparagine 14, and asparagine 36. Residues 63 to 83 (IVIGMALVGIMLVCGIGNFIF) traverse the membrane as a helical segment. Residues 84-98 (IAALVRYKKLRNLTN) lie on the Cytoplasmic side of the membrane. A helical membrane pass occupies residues 99–119 (LLIANLAISDFLVAIVCCPFE). The Extracellular portion of the chain corresponds to 120–146 (MDYYVVRQLSWEHGHVLCTSVNYLRTV). Cysteines 137 and 217 form a disulfide. A helical membrane pass occupies residues 147–167 (SLYVSTNALLAIAIDRYLAIV). The Cytoplasmic portion of the chain corresponds to 168–180 (HPLRPRMKCQTAT). The helical transmembrane segment at 181 to 201 (GLIALVWTVSILIAIPSAYFT) threads the bilayer. At 202 to 232 (TETVLVIVKSQEKIFCGQIWPVDQQLYYKSY) the chain is on the extracellular side. Residues 233–253 (FLFIFGIEFVGPVVTMTLCYA) traverse the membrane as a helical segment. Residues 254-282 (RISRELWFKAVPGFQTEQIRKRLRCRRKT) lie on the Cytoplasmic side of the membrane. A helical membrane pass occupies residues 283–303 (VLVLMCILTAYVLCWAPFYGF). Residues 304–322 (TIVRDFFPTVFVKEKHYLT) lie on the Extracellular side of the membrane. A helical membrane pass occupies residues 323 to 343 (AFYIVECIAMSNSMINTLCFV). At 344-393 (TVKNDTVKYFKKIMLLHWKASYNGGKSSADLDLKTIGMPATEEVDCIRLK) the chain is on the cytoplasmic side.

The protein belongs to the G-protein coupled receptor 1 family. In terms of tissue distribution, localizes to glandular epithelium, stroma and vascular endothelial cells of first trimester decidua (at protein level). Up-regulated in first trimester decidua when compared with non-pregnant endometrium. Expressed in the stomach, throughout the small intestine, colon, rectum, thyroid gland, pituitary gland, salivary gland, adrenal gland, testis, ovary, brain, spleen, prostate and pancreas.

The protein localises to the cell membrane. Receptor for prokineticin 1. Exclusively coupled to the G(q) subclass of heteromeric G proteins. Activation leads to mobilization of calcium, stimulation of phosphoinositide turnover and activation of p44/p42 mitogen-activated protein kinase. May play a role during early pregnancy. This Homo sapiens (Human) protein is Prokineticin receptor 1 (PROKR1).